A 295-amino-acid polypeptide reads, in one-letter code: Ribosomal RNA small subunit methyltransferase A (295 aa).

S-adenosyl-L-methionine is bound by residues Asn29, Leu31, Gly56, Glu77, Asp102, and Asn128.

This sequence belongs to the class I-like SAM-binding methyltransferase superfamily. rRNA adenine N(6)-methyltransferase family. RsmA subfamily.

The protein resides in the cytoplasm. It carries out the reaction adenosine(1518)/adenosine(1519) in 16S rRNA + 4 S-adenosyl-L-methionine = N(6)-dimethyladenosine(1518)/N(6)-dimethyladenosine(1519) in 16S rRNA + 4 S-adenosyl-L-homocysteine + 4 H(+). In terms of biological role, specifically dimethylates two adjacent adenosines (A1518 and A1519) in the loop of a conserved hairpin near the 3'-end of 16S rRNA in the 30S particle. May play a critical role in biogenesis of 30S subunits. This Listeria monocytogenes serotype 4a (strain HCC23) protein is Ribosomal RNA small subunit methyltransferase A.